We begin with the raw amino-acid sequence, 298 residues long: Craniofacial development protein 1 (298 aa).

Acidic residues-rich tracts occupy residues 1 to 18 (MEEF…DEDY) and 25 to 43 (YSED…DVEE). Disordered regions lie at residues 1–159 (MEEF…PKET) and 179–223 (KEVD…SSGM). The span at 49–65 (KGTKRKAERFMPRKRKQ) shows a compositional bias: basic residues. Residues serine 82 and serine 85 each carry the phosphoserine modification. A compositionally biased stretch (acidic residues) spans 87-102 (SEEEDTATEQEEGTES). Over residues 103–112 (EDARKKKEDE) the composition is skewed to basic and acidic residues. The residue at position 116 (serine 116) is a Phosphoserine. Residues 124–134 (KSKVPPSTPVK) show a composition bias toward low complexity. Lysine 149 participates in a covalent cross-link: Glycyl lysine isopeptide (Lys-Gly) (interchain with G-Cter in SUMO2). 2 stretches are compositionally biased toward basic and acidic residues: residues 149-159 (KAEEQEKPKET) and 179-200 (KEVD…KEKP). A hydrophilic region spans residues 177 to 216 (VTKEVDPTSKEAKSFFKQSEKEKPQPNVPSAVSSLPAGSG). Phosphoserine is present on serine 215. The BCNT-C domain maps to 217–298 (LKRSSGMSSL…RDLRLSKMKP (82 aa)). Lysine 218 carries the post-translational modification N6-methyllysine.

The protein localises to the chromosome. Its subcellular location is the centromere. It localises to the kinetochore. Its function is as follows. May play a role during embryogenesis. This Tragulus javanicus (Lesser Malay chevrotain) protein is Craniofacial development protein 1 (CFDP1).